We begin with the raw amino-acid sequence, 282 residues long: Ribosomal RNA small subunit methyltransferase A (282 aa).

6 residues coordinate S-adenosyl-L-methionine: asparagine 28, leucine 30, glycine 55, glutamate 77, aspartate 103, and asparagine 122.

This sequence belongs to the class I-like SAM-binding methyltransferase superfamily. rRNA adenine N(6)-methyltransferase family. RsmA subfamily.

It is found in the cytoplasm. The enzyme catalyses adenosine(1518)/adenosine(1519) in 16S rRNA + 4 S-adenosyl-L-methionine = N(6)-dimethyladenosine(1518)/N(6)-dimethyladenosine(1519) in 16S rRNA + 4 S-adenosyl-L-homocysteine + 4 H(+). Its function is as follows. Specifically dimethylates two adjacent adenosines (A1518 and A1519) in the loop of a conserved hairpin near the 3'-end of 16S rRNA in the 30S particle. May play a critical role in biogenesis of 30S subunits. This Paracoccus denitrificans (strain Pd 1222) protein is Ribosomal RNA small subunit methyltransferase A.